The following is a 175-amino-acid chain: Small ribosomal subunit protein uS5 (175 aa).

The 64-residue stretch at 11–74 (LSEVLVDVNR…QAAKKRMMKV (64 aa)) folds into the S5 DRBM domain.

The protein belongs to the universal ribosomal protein uS5 family. As to quaternary structure, part of the 30S ribosomal subunit. Contacts proteins S4 and S8.

Its function is as follows. With S4 and S12 plays an important role in translational accuracy. In terms of biological role, located at the back of the 30S subunit body where it stabilizes the conformation of the head with respect to the body. This Rickettsia prowazekii (strain Madrid E) protein is Small ribosomal subunit protein uS5.